The following is a 518-amino-acid chain: Sensor protein kinase HptS (518 aa).

A run of 2 helical transmembrane segments spans residues 20-40 and 222-242; these read IFPV…IYIW and GITL…FGFI. One can recognise a Histidine kinase domain in the interval 297–513; it reads EQLIHSIEHT…LICYKIPLSR (217 aa). His-325 bears the Phosphohistidine; by autocatalysis mark.

Autophosphorylated.

The protein resides in the cell membrane. It catalyses the reaction ATP + protein L-histidine = ADP + protein N-phospho-L-histidine.. Its function is as follows. Member of the two-component regulatory system HptS/HptR that regulates genes involved in hexose phosphate transport system in response to changes in extracellular phosphate sources. May act as a sensor protein kinase which is autophosphorylated at a histidine residue and transfers its phosphate group to the conserved aspartic acid residue in the regulatory domain of HptS. In turn, HptS antagonizes CcpA-dependent transcription of a subset of CcpA-regulated genes involved in antibiotic susceptibility. The sequence is that of Sensor protein kinase HptS (hptS) from Staphylococcus aureus (strain USA300).